Reading from the N-terminus, the 313-residue chain is MRNVTFRQLRTVEAVCRLGKINLAAEALGLTGPALTLQIQHLERDAGIALFDRTRGGMVPTAYGLAFLEAARAIEDSLIALEDSIDAIKGLRTGRLRLGVVSTGKYFAPQLIAAFRDQVPAVEINLFIGNRAEIIAKLRDHEIDIALMGRPPRDFEVRAQVFGDHPLVFIAPAGHPLAGVLEISRERIAQEQFLVREKGSGTRISLEIFLSDTPHELEELGTEIASNETIKQAVIAGLGIAFISAHTIEQEVKLGRLVILDVIDTPIRRQWFTVSRLDRVATPAMQAFERFVLASGARYLPVVSKPYPANAFG.

The HTH lysR-type domain maps to 1-61 (MRNVTFRQLR…DRTRGGMVPT (61 aa)). A DNA-binding region (H-T-H motif) is located at residues 21–40 (INLAAEALGLTGPALTLQIQ).

The protein belongs to the LysR transcriptional regulatory family.

Functionally, transcriptional activator for the cbb operon for RuBisCO and other Calvin cycle genes. The chain is HTH-type transcriptional regulator CbbR (cbbR) from Rhizobium meliloti (strain 1021) (Ensifer meliloti).